The sequence spans 438 residues: Xylose isomerase (438 aa).

Residues histidine 100 and aspartate 103 contribute to the active site. 7 residues coordinate Mg(2+): glutamate 231, glutamate 267, histidine 270, aspartate 295, aspartate 306, aspartate 308, and aspartate 338.

This sequence belongs to the xylose isomerase family. As to quaternary structure, homotetramer. It depends on Mg(2+) as a cofactor.

It is found in the cytoplasm. The catalysed reaction is alpha-D-xylose = alpha-D-xylulofuranose. This is Xylose isomerase from Pseudomonas syringae pv. tomato (strain ATCC BAA-871 / DC3000).